The following is a 501-amino-acid chain: Lysine--tRNA ligase (501 aa).

2 residues coordinate Mg(2+): glutamate 411 and glutamate 418.

The protein belongs to the class-II aminoacyl-tRNA synthetase family. In terms of assembly, homodimer. Mg(2+) serves as cofactor.

The protein localises to the cytoplasm. The enzyme catalyses tRNA(Lys) + L-lysine + ATP = L-lysyl-tRNA(Lys) + AMP + diphosphate. This chain is Lysine--tRNA ligase, found in Clostridium perfringens (strain ATCC 13124 / DSM 756 / JCM 1290 / NCIMB 6125 / NCTC 8237 / Type A).